A 200-amino-acid polypeptide reads, in one-letter code: GTP cyclohydrolase-2 (200 aa).

Residue 52-56 (RIHSE) coordinates GTP. Zn(2+)-binding residues include C57, C68, and C70. Residues Q73, 94-96 (EGR), and T116 each bind GTP. The active-site Proton acceptor is the D128. Residue R130 is the Nucleophile of the active site. The GTP site is built by T151 and K156.

Belongs to the GTP cyclohydrolase II family. Zn(2+) serves as cofactor.

The enzyme catalyses GTP + 4 H2O = 2,5-diamino-6-hydroxy-4-(5-phosphoribosylamino)-pyrimidine + formate + 2 phosphate + 3 H(+). Its pathway is cofactor biosynthesis; riboflavin biosynthesis; 5-amino-6-(D-ribitylamino)uracil from GTP: step 1/4. Catalyzes the conversion of GTP to 2,5-diamino-6-ribosylamino-4(3H)-pyrimidinone 5'-phosphate (DARP), formate and pyrophosphate. The sequence is that of GTP cyclohydrolase-2 from Psychromonas ingrahamii (strain DSM 17664 / CCUG 51855 / 37).